The primary structure comprises 537 residues: Protein disulfide isomerase-like 1-5 (537 aa).

An N-terminal signal peptide occupies residues M1–A29. Residues L58–G184 form the Thioredoxin 1 domain. The Nucleophile role is filled by C106. Residues N160, N364, and N416 are each glycosylated (N-linked (GlcNAc...) asparagine). Residues L380–L526 form the Thioredoxin 2 domain. Residues C447 and C450 each act as nucleophile in the active site. C447 and C450 are oxidised to a cystine. The N-linked (GlcNAc...) asparagine glycan is linked to N530. Positions K534 to L537 match the Prevents secretion from ER motif.

Belongs to the protein disulfide isomerase family. As to expression, widely expressed.

It localises to the endoplasmic reticulum lumen. The catalysed reaction is Catalyzes the rearrangement of -S-S- bonds in proteins.. In terms of biological role, acts as a protein-folding catalyst that interacts with nascent polypeptides to catalyze the formation, isomerization, and reduction or oxidation of disulfide bonds. In Arabidopsis thaliana (Mouse-ear cress), this protein is Protein disulfide isomerase-like 1-5 (PDIL1-5).